The primary structure comprises 942 residues: Sucrose synthase 6 (942 aa).

Residues 281 to 759 form a GT-B glycosyltransferase region; that stretch reads TVFNVVIFSV…GLKRIYECYT (479 aa). Residues 830–862 are disordered; the sequence is TTNLGAGSKQKEVTETEKTKQKSKDGQEQHDVK. Residues 838–862 are compositionally biased toward basic and acidic residues; it reads KQKEVTETEKTKQKSKDGQEQHDVK.

This sequence belongs to the glycosyltransferase 1 family. Plant sucrose synthase subfamily. Detected in the whole plant but more precisely confined to the vasculature in cotyledons, leaves, petals, anthers and roots.

Its subcellular location is the secreted. It localises to the cell wall. The enzyme catalyses an NDP-alpha-D-glucose + D-fructose = a ribonucleoside 5'-diphosphate + sucrose + H(+). Sucrose-cleaving enzyme that provides UDP-glucose and fructose for various metabolic pathways. Functions in callose synthesis at the site of phloem sieve elements. The polypeptide is Sucrose synthase 6 (SUS6) (Arabidopsis thaliana (Mouse-ear cress)).